The chain runs to 172 residues: Large ribosomal subunit protein uL10 (172 aa).

Belongs to the universal ribosomal protein uL10 family. Part of the ribosomal stalk of the 50S ribosomal subunit. The N-terminus interacts with L11 and the large rRNA to form the base of the stalk. The C-terminus forms an elongated spine to which L12 dimers bind in a sequential fashion forming a multimeric L10(L12)X complex.

In terms of biological role, forms part of the ribosomal stalk, playing a central role in the interaction of the ribosome with GTP-bound translation factors. This chain is Large ribosomal subunit protein uL10, found in Francisella tularensis subsp. holarctica (strain FTNF002-00 / FTA).